The following is a 304-amino-acid chain: Killer cell immunoglobulin-like receptor 2DS1 (304 aa).

The signal sequence occupies residues 1–21; the sequence is MSLTVVSMACVGFFLLQGAWP. The Extracellular portion of the chain corresponds to 22–245; that stretch reads HEGVHRKPSL…SETGNPRHLH (224 aa). 2 consecutive Ig-like C2-type domains span residues 42–107 and 142–205; these read EETV…VTHS and GENV…FRDS. Cys-49 and Cys-100 are oxidised to a cystine. Asn-67, Asn-84, Asn-144, and Asn-178 each carry an N-linked (GlcNAc...) asparagine glycan. A disulfide bridge links Cys-149 with Cys-198. The interval 220–239 is disordered; that stretch reads VTGNPSNSWPSPTEPSSETG. Low complexity predominate over residues 223 to 239; that stretch reads NPSNSWPSPTEPSSETG. A helical transmembrane segment spans residues 246 to 264; sequence VLIGTSVVKIPFTILLFFL. Over 265–304 the chain is Cytoplasmic; the sequence is LHRWCSDKKNAAVMDQEPAGNRTVNSEDSDEQDHQEVSYA. The segment at 280–304 is disordered; sequence QEPAGNRTVNSEDSDEQDHQEVSYA.

It belongs to the immunoglobulin superfamily. Interacts with the adapter protein TYROBP/DAP12; the interaction enhances KIR2DS1 stability at the cell surface. Expressed by NK cells.

It is found in the cell membrane. Its function is as follows. Receptor on natural killer (NK) cells for some HLA-C alleles such as w6. Does not inhibit the activity of NK cells. This Homo sapiens (Human) protein is Killer cell immunoglobulin-like receptor 2DS1.